Consider the following 216-residue polypeptide: Large ribosomal subunit protein uL24m (216 aa).

Residues 1–9 (MRLTLLLEM) constitute a mitochondrion transit peptide. One can recognise a KOW domain in the interval 56–89 (YFRGDTVEVLHGKDAGKQGKVTQVVRARNWVVVD).

This sequence belongs to the universal ribosomal protein uL24 family. In terms of assembly, component of the mitochondrial ribosome large subunit (39S) which comprises a 16S rRNA and about 50 distinct proteins. In terms of tissue distribution, ubiquitous. Expressed at greater levels in the kidney, adipose tissue, muscle and liver than the brain, heart, ovary and lung.

The protein resides in the mitochondrion. The chain is Large ribosomal subunit protein uL24m (mrpl24) from Xenopus laevis (African clawed frog).